The chain runs to 105 residues: Putative pterin-4-alpha-carbinolamine dehydratase (105 aa).

The protein belongs to the pterin-4-alpha-carbinolamine dehydratase family.

It carries out the reaction (4aS,6R)-4a-hydroxy-L-erythro-5,6,7,8-tetrahydrobiopterin = (6R)-L-erythro-6,7-dihydrobiopterin + H2O. In Sinorhizobium fredii (strain NBRC 101917 / NGR234), this protein is Putative pterin-4-alpha-carbinolamine dehydratase.